The primary structure comprises 490 residues: Cytochrome P450 2C55 (490 aa).

Residue Cys-435 participates in heme binding.

This sequence belongs to the cytochrome P450 family. Heme serves as cofactor. As to expression, highest level in colon. Low levels in liver and small intestine.

The protein resides in the endoplasmic reticulum membrane. It is found in the microsome membrane. The enzyme catalyses an organic molecule + reduced [NADPH--hemoprotein reductase] + O2 = an alcohol + oxidized [NADPH--hemoprotein reductase] + H2O + H(+). Its function is as follows. Metabolizes arachidonic acid mainly to 19-hydroxyeicosatetraenoic acid (HETE). The polypeptide is Cytochrome P450 2C55 (Mus musculus (Mouse)).